The chain runs to 931 residues: Isoleucine--tRNA ligase (931 aa).

Residues 58-68 (PYANGHLHCGH) carry the 'HIGH' region motif. Glu559 lines the L-isoleucyl-5'-AMP pocket. Positions 600-604 (KLSKS) match the 'KMSKS' region motif. Lys603 is an ATP binding site. Residues Cys894, Cys897, Cys914, and Cys917 each coordinate Zn(2+).

This sequence belongs to the class-I aminoacyl-tRNA synthetase family. IleS type 1 subfamily. As to quaternary structure, monomer. The cofactor is Zn(2+).

Its subcellular location is the cytoplasm. It carries out the reaction tRNA(Ile) + L-isoleucine + ATP = L-isoleucyl-tRNA(Ile) + AMP + diphosphate. In terms of biological role, catalyzes the attachment of isoleucine to tRNA(Ile). As IleRS can inadvertently accommodate and process structurally similar amino acids such as valine, to avoid such errors it has two additional distinct tRNA(Ile)-dependent editing activities. One activity is designated as 'pretransfer' editing and involves the hydrolysis of activated Val-AMP. The other activity is designated 'posttransfer' editing and involves deacylation of mischarged Val-tRNA(Ile). This is Isoleucine--tRNA ligase from Legionella pneumophila (strain Paris).